The sequence spans 82 residues: Small ribosomal subunit protein bS16 (82 aa).

This sequence belongs to the bacterial ribosomal protein bS16 family.

The protein is Small ribosomal subunit protein bS16 of Actinobacillus succinogenes (strain ATCC 55618 / DSM 22257 / CCUG 43843 / 130Z).